A 333-amino-acid polypeptide reads, in one-letter code: Probable endo-beta-1,4-glucanase B (333 aa).

An N-terminal signal peptide occupies residues 1–17 (MKFRNLFFAAVAGSAVA). N-linked (GlcNAc...) asparagine glycans are attached at residues N37 and N100. The active-site Proton donor is E160. E267 acts as the Nucleophile in catalysis.

Belongs to the glycosyl hydrolase 5 (cellulase A) family.

It is found in the secreted. The catalysed reaction is Endohydrolysis of (1-&gt;4)-beta-D-glucosidic linkages in cellulose, lichenin and cereal beta-D-glucans.. Functionally, has endoglucanase activity on substrates containing beta-1,4 glycosidic bonds, like in carboxymethylcellulose (CMC), hydroxyethylcellulose (HEC) and beta-glucan. Involved in the degradation of complex natural cellulosic substrates. This Aspergillus oryzae (strain ATCC 42149 / RIB 40) (Yellow koji mold) protein is Probable endo-beta-1,4-glucanase B (eglB).